Reading from the N-terminus, the 509-residue chain is Carboxysome shell carbonic anhydrase (509 aa).

Residue cysteine 170 participates in Zn(2+) binding. The Proton acceptor role is filled by aspartate 172. Residues histidine 238 and cysteine 249 each coordinate Zn(2+).

It belongs to the beta-class carbonic anhydrase family. CsoSCA subfamily. As to quaternary structure, homodimer. Requires Zn(2+) as cofactor.

The protein resides in the carboxysome. The enzyme catalyses hydrogencarbonate + H(+) = CO2 + H2O. Functionally, reversible hydration of carbon dioxide. Essential for photosynthetic carbon dioxide fixation, supplies CO(2) to RuBisCO (ribulose bisphosphate carboxylase, cbbL-cbbS) in the carboxysome. There are estimated to be 29 CsoSCA oligomers per carboxysome. In Prochlorococcus marinus subsp. pastoris (strain CCMP1986 / NIES-2087 / MED4), this protein is Carboxysome shell carbonic anhydrase.